The sequence spans 451 residues: MTISDSPQTPENLSLPKQGFRQLIKIVADLRLAIVLLLAIALFSISGTVIEQGETISFYQQNYPEDPALFGFLTWKVILILGLNHVYTTWWFLSLLVLFGTSLTTCTFTRQFPALKAARKWNFYQKARQFEKLALSTELAINDLKFVNNLLEQKGYKTFQENQAIYARKGIIGKIGPIVVHAAMLIILGGAIWGALTGFLAQAMVPTGSEFKVNNIIEAGPLSQPQIPKDWGIRVNRFWIDYTPDGTIDQFYSDLSVINNDGEELKHKTIYVNEPLRYHGVTFYQTDWGIAGVQAQVNNSPIFQLPMALLNTNGNGRIWGTWIPTKPDLSEGVSLLAKDLQGTMMVYDQKGDLYSAVRPGMILDINGVRLKIYQLIGSTGLQIKADPGIPFVYTGFGLLMMGVIMSYVSHSQIWVLQEDEHCYIGGKTNRSQVTFERELLGIIESLEPEKT.

3 consecutive transmembrane segments (helical) span residues 30–50 (LRLA…GTVI), 89–109 (TWWF…CTFT), and 175–195 (IGPI…IWGA).

The protein belongs to the Ccs1/CcsB family. As to quaternary structure, may interact with CcsA.

It is found in the cellular thylakoid membrane. In terms of biological role, required during biogenesis of c-type cytochromes (cytochrome c6 and cytochrome f) at the step of heme attachment. In Crocosphaera subtropica (strain ATCC 51142 / BH68) (Cyanothece sp. (strain ATCC 51142)), this protein is Cytochrome c biogenesis protein CcsB.